A 468-amino-acid polypeptide reads, in one-letter code: Glutamate--tRNA ligase (468 aa).

The 'HIGH' region motif lies at 12–22; sequence PSPTGFIHLGN. The 'KMSKS' region motif lies at 244-248; sequence KMSKR. ATP is bound at residue Lys-247.

Belongs to the class-I aminoacyl-tRNA synthetase family. Glutamate--tRNA ligase type 1 subfamily. As to quaternary structure, monomer.

It is found in the cytoplasm. It catalyses the reaction tRNA(Glu) + L-glutamate + ATP = L-glutamyl-tRNA(Glu) + AMP + diphosphate. Catalyzes the attachment of glutamate to tRNA(Glu) in a two-step reaction: glutamate is first activated by ATP to form Glu-AMP and then transferred to the acceptor end of tRNA(Glu). This chain is Glutamate--tRNA ligase, found in Polynucleobacter asymbioticus (strain DSM 18221 / CIP 109841 / QLW-P1DMWA-1) (Polynucleobacter necessarius subsp. asymbioticus).